The chain runs to 271 residues: Zinc-finger homeodomain protein 8 (271 aa).

Serine 16 carries the post-translational modification Phosphoserine. The ZF-HD dimerization-type; degenerate zinc finger occupies 56–107; the sequence is YKECLKNHAAGIGGHALDGCGEFMPSPSFNSNDPASLTCAACGCHRNFHRRE. Residues 125–154 form a disordered region; sequence HNRHQLPPPPPPHLAGIRSPDDDDSASPPP. A DNA-binding region (homeobox) is located at residues 179–242; sequence RKRFRTKFSQ…NNKISGRSGA (64 aa).

Homo- and heterodimer with other ZFHD proteins. Interacts with MIF1, MIF2 and MIF3; these interactions prevent nuclear localization and DNA-binding to inhibit transcription regulation activity. Binds to ZHD1, ZHD2, ZHD4, ZHD10 and ZHD11. Interacts with HIPP30. As to expression, mostly expressed in flowers and inflorescence.

The protein localises to the nucleus. Putative transcription factor. The sequence is that of Zinc-finger homeodomain protein 8 (ZHD8) from Arabidopsis thaliana (Mouse-ear cress).